The sequence spans 613 residues: DNA mismatch repair protein MutL (613 aa).

Belongs to the DNA mismatch repair MutL/HexB family.

This protein is involved in the repair of mismatches in DNA. It is required for dam-dependent methyl-directed DNA mismatch repair. May act as a 'molecular matchmaker', a protein that promotes the formation of a stable complex between two or more DNA-binding proteins in an ATP-dependent manner without itself being part of a final effector complex. This is DNA mismatch repair protein MutL from Janthinobacterium sp. (strain Marseille) (Minibacterium massiliensis).